An 85-amino-acid polypeptide reads, in one-letter code: METLLSFSAIAVGIIVGLASLGTAIGFALLGGKFLEGAARQPEMAPMLQVKMFIIAGLLDAVPMIGIVIALLFTFANPFVGQLAG.

The next 2 helical transmembrane spans lie at 10–30 (IAVG…FALL) and 53–73 (FIIA…ALLF).

Belongs to the ATPase C chain family. In terms of assembly, F-type ATPases have 2 components, F(1) - the catalytic core - and F(0) - the membrane proton channel. F(1) has five subunits: alpha(3), beta(3), gamma(1), delta(1), epsilon(1). F(0) has three main subunits: a(1), b(2) and c(10-14). The alpha and beta chains form an alternating ring which encloses part of the gamma chain. F(1) is attached to F(0) by a central stalk formed by the gamma and epsilon chains, while a peripheral stalk is formed by the delta and b chains.

It is found in the cell inner membrane. Its function is as follows. F(1)F(0) ATP synthase produces ATP from ADP in the presence of a proton or sodium gradient. F-type ATPases consist of two structural domains, F(1) containing the extramembraneous catalytic core and F(0) containing the membrane proton channel, linked together by a central stalk and a peripheral stalk. During catalysis, ATP synthesis in the catalytic domain of F(1) is coupled via a rotary mechanism of the central stalk subunits to proton translocation. Key component of the F(0) channel; it plays a direct role in translocation across the membrane. A homomeric c-ring of between 10-14 subunits forms the central stalk rotor element with the F(1) delta and epsilon subunits. The chain is ATP synthase subunit c from Aliivibrio fischeri (strain ATCC 700601 / ES114) (Vibrio fischeri).